Consider the following 42-residue polypeptide: Fungal defensin eurocin (42 aa).

Residues Phe2, Gly3, Cys4, and His14 each coordinate beta-D-GlcNAc-(1-&gt;4)-Mur2Ac(oyl-L-Ala-gamma-D-Glu-L-Lys-D-Ala-D-Ala)-di-trans,octa-cis-undecaprenyl diphosphate. Disulfide bonds link Cys4-Cys27, Cys11-Cys38, and Cys15-Cys40. The segment at 31–35 is interaction site with membranes lipids; sequence WYLGH. Cys38 provides a ligand contact to beta-D-GlcNAc-(1-&gt;4)-Mur2Ac(oyl-L-Ala-gamma-D-Glu-L-Lys-D-Ala-D-Ala)-di-trans,octa-cis-undecaprenyl diphosphate.

The protein belongs to the invertebrate defensin family.

It is found in the secreted. The protein resides in the target cell membrane. In terms of biological role, antimicrobial peptide that acts against Gram-positive bacteria but not against Gram-negative bacteria. It selectively inhibits peptidoglycan biosynthesis through complex formation with the cell wall precursor lipid II (1:1 molar ratio) thus inhibiting cell wall synthesis. It does not disrupt cell membranes. In vivo, is effective against an intraperitoneal infection with S.pneumoniae. In vitro, it shows very low hemolytic and cytolytic activities. The protein is Fungal defensin eurocin of Aspergillus amstelodami.